The following is a 117-amino-acid chain: MPRAVNGTIHKNRRRRILKDAKGFRGARSKLYRTAKSAVMKAGQWAYRDRRAKKRDFRKLWIIRINAAARENGLSYSVFMNSLKKLGIHMDRKSLAELAFNDREVFNSLVEKIKVAG.

This sequence belongs to the bacterial ribosomal protein bL20 family.

Its function is as follows. Binds directly to 23S ribosomal RNA and is necessary for the in vitro assembly process of the 50S ribosomal subunit. It is not involved in the protein synthesizing functions of that subunit. The polypeptide is Large ribosomal subunit protein bL20 (Leptospira interrogans serogroup Icterohaemorrhagiae serovar copenhageni (strain Fiocruz L1-130)).